We begin with the raw amino-acid sequence, 108 residues long: Protein YcgL (108 aa).

Residues 12–96 (MFCVIYRSSK…PPEDLLKQHL (85 aa)) form the YcgL domain.

This is Protein YcgL from Escherichia coli O17:K52:H18 (strain UMN026 / ExPEC).